Consider the following 61-residue polypeptide: Large ribosomal subunit protein bL28 (61 aa).

This sequence belongs to the bacterial ribosomal protein bL28 family.

The chain is Large ribosomal subunit protein bL28 from Nocardioides sp. (strain ATCC BAA-499 / JS614).